The following is a 102-amino-acid chain: Small ribosomal subunit protein uS10 (102 aa).

This sequence belongs to the universal ribosomal protein uS10 family. Part of the 30S ribosomal subunit.

Its function is as follows. Involved in the binding of tRNA to the ribosomes. This Staphylococcus aureus (strain JH9) protein is Small ribosomal subunit protein uS10.